We begin with the raw amino-acid sequence, 86 residues long: Large ribosomal subunit protein bL27 (86 aa).

The tract at residues 1–21 is disordered; sequence MAHKKGASSSRNGRDSAAQRL.

This sequence belongs to the bacterial ribosomal protein bL27 family.

The sequence is that of Large ribosomal subunit protein bL27 (rpmA) from Mycobacterium tuberculosis (strain CDC 1551 / Oshkosh).